A 33-amino-acid polypeptide reads, in one-letter code: Photosystem II reaction center protein Psb30 (33 aa).

The helical transmembrane segment at 5–25 (VIAQLIALALIVGSGPLVIAL) threads the bilayer.

Belongs to the Psb30/Ycf12 family. As to quaternary structure, PSII is composed of 1 copy each of membrane proteins PsbA, PsbB, PsbC, PsbD, PsbE, PsbF, PsbH, PsbI, PsbJ, PsbK, PsbL, PsbM, PsbT, PsbX, PsbY, PsbZ, Psb30/Ycf12, peripheral proteins of the oxygen-evolving complex and a large number of cofactors. It forms dimeric complexes.

Its subcellular location is the plastid. It is found in the chloroplast thylakoid membrane. In terms of biological role, a core subunit of photosystem II (PSII), probably helps stabilize the reaction center. This chain is Photosystem II reaction center protein Psb30, found in Physcomitrium patens (Spreading-leaved earth moss).